Reading from the N-terminus, the 151-residue chain is Group 10 secretory phospholipase A2 (151 aa).

The signal sequence occupies residues 1–17; that stretch reads MLLLLLLLLLGPGPGFS. Positions 18 to 28 are excised as a propeptide; sequence EATRRSHVYKR. Disulfide bonds link cysteine 39–cysteine 97, cysteine 53–cysteine 143, cysteine 55–cysteine 71, cysteine 70–cysteine 125, cysteine 76–cysteine 150, cysteine 77–cysteine 118, cysteine 86–cysteine 111, and cysteine 104–cysteine 116. Residues tyrosine 54, glycine 56, and glycine 58 each contribute to the Ca(2+) site. The active site involves histidine 74. Aspartate 75 contributes to the Ca(2+) binding site. Aspartate 119 is an active-site residue.

It belongs to the phospholipase A2 family. In terms of assembly, interacts with PLA2R1; this interaction mediates PLA2G10 clearance and inactivation. The cofactor is Ca(2+). As to expression, expressed at high levels in testis and the gastrointestinal tract including stomach and colon. Expressed at lower levels in other tissues including small intestine, uterus, oviduct, lung, thymus, spleen and brain. Expressed in Paneth-like secretory epithelial cells of the colon. Expressed in gastric and ileac epithelial cells and in glandular epithelium of intestinal mucosa (at protein level). Expressed in late spermatogenic cells, spermatocytes and spermatids, but not spermatogonia in seminiferous tubules (at protein level). Expressed mainly in the apical side of endometrial epithelial cells and in the interstitium beneath the epithelium of uterus (at protein level). Expressed in resident spleen macrophages (at protein level). Expressed at outermost layer of hair follicles. Expressed in dorsal root ganglia in both NEFH-positive A-fibers and PRPH-positive C-fibers (at protein level).

The protein localises to the secreted. It is found in the lysosome. The protein resides in the cytoplasmic vesicle. It localises to the secretory vesicle. Its subcellular location is the acrosome. It catalyses the reaction a 1,2-diacyl-sn-glycero-3-phosphocholine + H2O = a 1-acyl-sn-glycero-3-phosphocholine + a fatty acid + H(+). The catalysed reaction is 1-hexadecanoyl-2-(9Z-octadecenoyl)-sn-glycero-3-phosphocholine + H2O = 1-hexadecanoyl-sn-glycero-3-phosphocholine + (9Z)-octadecenoate + H(+). It carries out the reaction 1-octadecanoyl-2-(5Z,8Z,11Z,14Z-eicosatetraenoyl)-sn-glycero-3-phosphocholine + H2O = 1-octadecanoyl-sn-glycero-3-phosphocholine + (5Z,8Z,11Z,14Z)-eicosatetraenoate + H(+). The enzyme catalyses 1,2-dihexadecanoyl-sn-glycero-3-phosphocholine + H2O = 1-hexadecanoyl-sn-glycero-3-phosphocholine + hexadecanoate + H(+). It catalyses the reaction 1-hexadecanoyl-2-(9Z-octadecenoyl)-sn-glycero-3-phosphoglycerol + H2O = 1-hexadecanoyl-sn-glycero-3-phosphoglycerol + (9Z)-octadecenoate + H(+). The catalysed reaction is 1,2-dihexadecanoyl-sn-glycero-3-phospho-(1'-sn-glycerol) + H2O = 1-hexadecanoyl-sn-glycero-3-phospho-(1'-sn-glycerol) + hexadecanoate + H(+). It carries out the reaction 1-hexadecanoyl-2-(9Z-octadecenoyl)-sn-glycero-3-phospho-L-serine + H2O = 1-hexadecanoyl-sn-glycero-3-phospho-L-serine + (9Z)-octadecenoate + H(+). The enzyme catalyses 1-hexadecanoyl-2-(9Z,12Z-octadecadienoyl)-sn-glycero-3-phosphoethanolamine + H2O = 1-hexadecanoyl-sn-glycero-3-phosphoethanolamine + (9Z,12Z)-octadecadienoate + H(+). It catalyses the reaction 1-hexadecanoyl-2-(9Z-octadecenoyl)-sn-glycero-3-phosphate + H2O = 1-hexadecanoyl-sn-glycero-3-phosphate + (9Z)-octadecenoate + H(+). The catalysed reaction is 1-O-hexadecyl-2-acetyl-sn-glycero-3-phosphocholine + H2O = 1-O-hexadecyl-sn-glycero-3-phosphocholine + acetate + H(+). Secretory calcium-dependent phospholipase A2 that primarily targets extracellular phospholipids. Hydrolyzes the ester bond of the fatty acyl group attached at sn-2 position of phospholipids with preference for phosphatidylcholines and phosphatidylglycerols over phosphatidylethanolamines. Preferentially releases sn-2 omega-6 and omega-3 polyunsaturated fatty acyl (PUFA) chains over saturated fatty acyls. Contributes to phospholipid remodeling of very low-density lipoprotein (VLDL), low-density lipoprotein (LDL) and high-density lipoprotein (HDL) particles. Hydrolyzes LDL phospholipids releasing unsaturated fatty acids that regulate macrophage differentiation toward foam cells. Efficiently hydrolyzes and inactivates PAF, a potent lipid mediator present in oxidized LDL. May act in an autocrine and paracrine manner. Secreted by lung epithelium, targets membrane phospholipids of infiltrating eosinophils, releasing arachidonate and boosting eicosanoid and cysteinyl leukotriene synthesis involved in airway inflammatory response. Secreted by gut epithelium, hydrolyzes dietary and biliary phosphatidylcholines in the gastrointestinal lumen, thereby regulating adipogenesis and body weight. Plays a stem cell regulator role in colon epithelium. Within intracellular compartment, mediates Paneth-like cell differentiation and its stem cell supporting functions by inhibiting Wnt signaling pathway in intestinal stem cell (ISC). Secreted in the intestinal lumen upon inflammation, acts in an autocrine way and promotes prostaglandin E2 synthesis that stimulates the Wnt signaling pathway in ISCs and tissue regeneration. May participate in hair follicle morphogenesis by regulating phosphatidylethanolamines metabolism at the outermost epithelial layer and facilitating melanin synthesis. By generating lysophosphatidylcholines (LPCs) at sperm acrosome controls sperm cell capacitation, acrosome reaction and overall fertility. May promote neurite outgrowth in neuron fibers involved in nociception. Contributes to lipid remodeling of cellular membranes and generation of lipid mediators involved in pathogen clearance. Cleaves sn-2 fatty acyl chains of phosphatidylglycerols and phosphatidylethanolamines, which are major components of membrane phospholipids in bacteria. Displays bactericidal activity against Gram-positive bacteria by directly hydrolyzing phospholipids of the bacterial membrane. In pulmonary epithelium, may contribute to host defense response against adenoviral infection. Prevents adenovirus entry into host cells by hydrolyzing host cell plasma membrane, releasing C16:0 LPCs that inhibit virus-mediated membrane fusion and viral infection. Likely prevents adenoviral entry into the endosomes of host cells. May play a role in maturation and activation of innate immune cells including macrophages, group 2 innate lymphoid cells and mast cells. The sequence is that of Group 10 secretory phospholipase A2 (Pla2g10) from Mus musculus (Mouse).